The primary structure comprises 370 residues: Queuine tRNA-ribosyltransferase (370 aa).

Aspartate 89 serves as the catalytic Proton acceptor. Substrate-binding positions include 89–93 (DSGGF), aspartate 143, glutamine 187, and glycine 214. Residues 245–251 (GVGKPEN) are RNA binding. Aspartate 264 functions as the Nucleophile in the catalytic mechanism. The interval 269 to 273 (TRNAR) is RNA binding; important for wobble base 34 recognition. The Zn(2+) site is built by cysteine 302, cysteine 304, cysteine 307, and histidine 333.

The protein belongs to the queuine tRNA-ribosyltransferase family. In terms of assembly, homodimer. Within each dimer, one monomer is responsible for RNA recognition and catalysis, while the other monomer binds to the replacement base PreQ1. Zn(2+) is required as a cofactor.

The enzyme catalyses 7-aminomethyl-7-carbaguanine + guanosine(34) in tRNA = 7-aminomethyl-7-carbaguanosine(34) in tRNA + guanine. Its pathway is tRNA modification; tRNA-queuosine biosynthesis. Catalyzes the base-exchange of a guanine (G) residue with the queuine precursor 7-aminomethyl-7-deazaguanine (PreQ1) at position 34 (anticodon wobble position) in tRNAs with GU(N) anticodons (tRNA-Asp, -Asn, -His and -Tyr). Catalysis occurs through a double-displacement mechanism. The nucleophile active site attacks the C1' of nucleotide 34 to detach the guanine base from the RNA, forming a covalent enzyme-RNA intermediate. The proton acceptor active site deprotonates the incoming PreQ1, allowing a nucleophilic attack on the C1' of the ribose to form the product. After dissociation, two additional enzymatic reactions on the tRNA convert PreQ1 to queuine (Q), resulting in the hypermodified nucleoside queuosine (7-(((4,5-cis-dihydroxy-2-cyclopenten-1-yl)amino)methyl)-7-deazaguanosine). The polypeptide is Queuine tRNA-ribosyltransferase (Hamiltonella defensa subsp. Acyrthosiphon pisum (strain 5AT)).